The chain runs to 201 residues: Dermatopontin (201 aa).

Positions 1 to 18 (MDLTLLWVLLPLVTVAWG) are cleaved as a signal peptide. Pyrrolidone carboxylic acid is present on Q19. Y23 bears the Sulfotyrosine mark. 4 consecutive repeat copies span residues 26 to 79 (SYHQ…ACMP), 70 to 75 (DRQWNY), 80 to 135 (TPQS…CCRY), and 125 to 130 (DREWQF). The segment at 26–135 (SYHQYHDYSD…REWQFYCCRY (110 aa)) is 2 X 53-55 AA tandem repeats. 5 disulfides stabilise this stretch: C50-C77, C90-C132, C106-C133, C139-C196, and C143-C189. Residues 70–186 (DRQWNYACMP…AVERDRQWKF (117 aa)) form a 3 X 6 AA tandem repeats of D-R-[EQ]-W-[NQK]-[FY] region. 4 positions are modified to sulfotyrosine: Y162, Y164, Y166, and Y167. Residues 181-186 (DRQWKF) form a 2-3 repeat. Y194 is modified (sulfotyrosine).

This sequence belongs to the dermatopontin family. As to quaternary structure, interacts with TGFB1, DCN and collagen. Sulfated on tyrosine residue(s). Expressed in skeletal muscle, heart, pancreas, skin and cultured fibroblasts.

It is found in the secreted. The protein localises to the extracellular space. Its subcellular location is the extracellular matrix. Its function is as follows. Seems to mediate adhesion by cell surface integrin binding. May serve as a communication link between the dermal fibroblast cell surface and its extracellular matrix environment. Enhances TGFB1 activity. Inhibits cell proliferation. Accelerates collagen fibril formation, and stabilizes collagen fibrils against low-temperature dissociation. In Bos taurus (Bovine), this protein is Dermatopontin (DPT).